The sequence spans 401 residues: DNA replication and repair protein RecF (401 aa).

30 to 37 (GYNGIGKT) contacts ATP.

It belongs to the RecF family.

The protein resides in the cytoplasm. In terms of biological role, the RecF protein is involved in DNA metabolism; it is required for DNA replication and normal SOS inducibility. RecF binds preferentially to single-stranded, linear DNA. It also seems to bind ATP. The chain is DNA replication and repair protein RecF from Arthrobacter sp. (strain FB24).